The following is an 89-amino-acid chain: Small ribosomal subunit protein uS19 (89 aa).

This sequence belongs to the universal ribosomal protein uS19 family.

Protein S19 forms a complex with S13 that binds strongly to the 16S ribosomal RNA. The chain is Small ribosomal subunit protein uS19 from Brachyspira hyodysenteriae (strain ATCC 49526 / WA1).